A 136-amino-acid polypeptide reads, in one-letter code: Large ribosomal subunit protein uL16 (136 aa).

Belongs to the universal ribosomal protein uL16 family. Part of the 50S ribosomal subunit.

In terms of biological role, binds 23S rRNA and is also seen to make contacts with the A and possibly P site tRNAs. The chain is Large ribosomal subunit protein uL16 from Shewanella loihica (strain ATCC BAA-1088 / PV-4).